The sequence spans 235 residues: Ubiquinone/menaquinone biosynthesis C-methyltransferase UbiE (235 aa).

S-adenosyl-L-methionine-binding residues include Thr60 and Asp81.

It belongs to the class I-like SAM-binding methyltransferase superfamily. MenG/UbiE family.

It carries out the reaction a 2-demethylmenaquinol + S-adenosyl-L-methionine = a menaquinol + S-adenosyl-L-homocysteine + H(+). It catalyses the reaction a 2-methoxy-6-(all-trans-polyprenyl)benzene-1,4-diol + S-adenosyl-L-methionine = a 5-methoxy-2-methyl-3-(all-trans-polyprenyl)benzene-1,4-diol + S-adenosyl-L-homocysteine + H(+). It functions in the pathway quinol/quinone metabolism; menaquinone biosynthesis; menaquinol from 1,4-dihydroxy-2-naphthoate: step 2/2. Its pathway is cofactor biosynthesis; ubiquinone biosynthesis. Functionally, methyltransferase required for the conversion of demethylmenaquinol (DMKH2) to menaquinol (MKH2) and the conversion of 2-polyprenyl-6-methoxy-1,4-benzoquinol (DDMQH2) to 2-polyprenyl-3-methyl-6-methoxy-1,4-benzoquinol (DMQH2). The sequence is that of Ubiquinone/menaquinone biosynthesis C-methyltransferase UbiE from Geotalea daltonii (strain DSM 22248 / JCM 15807 / FRC-32) (Geobacter daltonii).